The primary structure comprises 81 residues: Photosystem I iron-sulfur center (81 aa).

4Fe-4S ferredoxin-type domains follow at residues 2–31 (SHSV…MVPW) and 37–68 (GQIA…IRVY). 8 residues coordinate [4Fe-4S] cluster: Cys11, Cys14, Cys17, Cys21, Cys48, Cys51, Cys54, and Cys58.

As to quaternary structure, the cyanobacterial PSI reaction center is composed of one copy each of PsaA,B,C,D,E,F,I,J,K,L,M and X, and forms trimeric complexes. Requires [4Fe-4S] cluster as cofactor.

It is found in the cellular thylakoid membrane. The enzyme catalyses reduced [plastocyanin] + hnu + oxidized [2Fe-2S]-[ferredoxin] = oxidized [plastocyanin] + reduced [2Fe-2S]-[ferredoxin]. Its function is as follows. Apoprotein for the two 4Fe-4S centers FA and FB of photosystem I (PSI); essential for photochemical activity. FB is the terminal electron acceptor of PSI, donating electrons to ferredoxin. The C-terminus interacts with PsaA/B/D and helps assemble the protein into the PSI complex. Required for binding of PsaD and PsaE to PSI. PSI is a plastocyanin/cytochrome c6-ferredoxin oxidoreductase, converting photonic excitation into a charge separation, which transfers an electron from the donor P700 chlorophyll pair to the spectroscopically characterized acceptors A0, A1, FX, FA and FB in turn. Functionally, mutant proteins with a 3Fe-4S center are not observed bound to PSI in vitro, and are probably not able to do so in vivo. The chain is Photosystem I iron-sulfur center (psaC) from Picosynechococcus sp. (strain ATCC 27264 / PCC 7002 / PR-6) (Agmenellum quadruplicatum).